Consider the following 111-residue polypeptide: Ferredoxin-thioredoxin reductase, catalytic chain (111 aa).

Position 52 (C52) interacts with [4Fe-4S] cluster. Catalysis depends on C54, which acts as the Nucleophile. C54 and C84 are disulfide-bonded. C71, C73, and C82 together coordinate [4Fe-4S] cluster.

The protein belongs to the ferredoxin thioredoxin reductase beta subunit family. As to quaternary structure, heterodimer of subunit A (variable subunit) and subunit B (catalytic subunit). Heterodimeric FTR forms a complex with ferredoxin and thioredoxin. The cofactor is [4Fe-4S] cluster.

The protein localises to the plastid. Its subcellular location is the chloroplast. It carries out the reaction [thioredoxin]-disulfide + 2 reduced [2Fe-2S]-[ferredoxin] + 2 H(+) = [thioredoxin]-dithiol + 2 oxidized [2Fe-2S]-[ferredoxin]. In terms of biological role, catalytic subunit of the ferredoxin-thioredoxin reductase (FTR), which catalyzes the two-electron reduction of thioredoxins by the electrons provided by reduced ferredoxin. This Cyanidium caldarium (Red alga) protein is Ferredoxin-thioredoxin reductase, catalytic chain (ftrB).